The primary structure comprises 252 residues: Large ribosomal subunit protein uL4 (252 aa).

The protein belongs to the universal ribosomal protein uL4 family. Part of the 50S ribosomal subunit.

One of the primary rRNA binding proteins, this protein initially binds near the 5'-end of the 23S rRNA. It is important during the early stages of 50S assembly. It makes multiple contacts with different domains of the 23S rRNA in the assembled 50S subunit and ribosome. Its function is as follows. Forms part of the polypeptide exit tunnel. This is Large ribosomal subunit protein uL4 from Methanocaldococcus jannaschii (strain ATCC 43067 / DSM 2661 / JAL-1 / JCM 10045 / NBRC 100440) (Methanococcus jannaschii).